We begin with the raw amino-acid sequence, 224 residues long: Uridylate kinase (224 aa).

Gly-9–Ser-10 is an ATP binding site. Gly-43 provides a ligand contact to UMP. 2 residues coordinate ATP: Gly-44 and Arg-48. Residues Asp-65 and Val-113 to Thr-119 contribute to the UMP site. Positions 139, 145, and 148 each coordinate ATP.

The protein belongs to the UMP kinase family. As to quaternary structure, homohexamer.

Its subcellular location is the cytoplasm. The catalysed reaction is UMP + ATP = UDP + ADP. It participates in pyrimidine metabolism; CTP biosynthesis via de novo pathway; UDP from UMP (UMPK route): step 1/1. With respect to regulation, inhibited by UTP. In terms of biological role, catalyzes the reversible phosphorylation of UMP to UDP. In Methanocella arvoryzae (strain DSM 22066 / NBRC 105507 / MRE50), this protein is Uridylate kinase.